Here is a 694-residue protein sequence, read N- to C-terminus: Pentatricopeptide repeat-containing protein At3g12770 (694 aa).

13 PPR repeats span residues 52 to 82 (SGFLITKLIHASSSFGDITFARQVFDDLPRP), 83 to 117 (QIFPWNAIIRGYSRNNHFQDALLMYSNMQLARVSP), 118 to 152 (DSFTFPHLLKACSGLSHLQMGRFVHAQVFRLGFDA), 153 to 183 (DVFVQNGLIALYAKCRRLGSARTVFEGLPLP), 186 to 220 (TIVSWTAIVSAYAQNGEPMEALEIFSQMRKMDVKP), 221 to 255 (DWVALVSVLNAFTCLQDLKQGRSIHASVVKMGLEI), 256 to 286 (EPDLLISLNTMYAKCGQVATAKILFDKMKSP), 287 to 321 (NLILWNAMISGYAKNGYAREAIDMFHEMINKDVRP), 322 to 356 (DTISITSAISACAQVGSLEQARSMYEYVGRSDYRD), 357 to 387 (DVFISSALIDMFAKCGSVEGARLVFDRTLDR), 388 to 422 (DVVVWSAMIVGYGLHGRAREAISLYRAMERGGVHP), 423 to 457 (NDVTFLGLLMACNHSGMVREGWWFFNRMADHKINP), and 458 to 488 (QQQHYACVIDLLGRAGHLDQAYEVIKCMPVQ). Positions 493–568 (VWGALLSACK…DVGCSWVEVR (76 aa)) are type E motif. Residues 569–599 (GRLEAFRVGDKSHPRYEEIERQVEWIESRLK) are type E(+) motif. Residues 600 to 694 (EGGFVANKDA…DGVCSCGDYW (95 aa)) are type DYW motif.

Belongs to the PPR family. PCMP-H subfamily.

The sequence is that of Pentatricopeptide repeat-containing protein At3g12770 (PCMP-H43) from Arabidopsis thaliana (Mouse-ear cress).